The sequence spans 600 residues: ATP-dependent RNA helicase DDX55 (600 aa).

Residues 9-37 carry the Q motif motif; that stretch reads WESLPVPLHPQVLGALRELGFPYMTPVQS. The 184-residue stretch at 40–223 folds into the Helicase ATP-binding domain; that stretch reads IPLFMRNKDV…RAGLRNPVRV (184 aa). 53-60 serves as a coordination point for ATP; it reads AVTGSGKT. The DEAD box signature appears at 171–174; sequence DEAD. The Helicase C-terminal domain occupies 254 to 402; that stretch reads KFNQLVHFLR…EMKPQRNTAD (149 aa). A compositionally biased stretch (basic and acidic residues) spans 500–513; the sequence is EQQRREKTENEGRR. Residues 500–550 are disordered; it reads EQQRREKTENEGRRKFIKNKAWSKQKAKKEKKKKMNEKRKREEGSDIEDED. Residues 514–537 are compositionally biased toward basic residues; sequence KFIKNKAWSKQKAKKEKKKKMNEK. The segment at 533–562 is important for nuclear localization; it reads KMNEKRKREEGSDIEDEDMEELLNDTRLLK. Residues S544 and S594 each carry the phosphoserine modification.

Belongs to the DEAD box helicase family. DDX55/SPB4 subfamily. In terms of assembly, interacts with 28S rRNA. Interacts with double-stranded RNA substrates in vitro; the interaction stimulates ATPase activity.

It is found in the nucleus. The protein localises to the nucleoplasm. It carries out the reaction ATP + H2O = ADP + phosphate + H(+). In terms of biological role, probable ATP-binding RNA helicase. Has ATPase activity and is involved in the maturation of precursor large subunit rRNAs. This Homo sapiens (Human) protein is ATP-dependent RNA helicase DDX55.